The primary structure comprises 176 residues: RNA pyrophosphohydrolase (176 aa).

One can recognise a Nudix hydrolase domain in the interval 6-149 (GYRPNVGIVI…KRDVYRRVMK (144 aa)). The Nudix box signature appears at 38–59 (GGINPGESAEQAMYRELFEEVG).

It belongs to the Nudix hydrolase family. RppH subfamily. A divalent metal cation is required as a cofactor.

Its function is as follows. Accelerates the degradation of transcripts by removing pyrophosphate from the 5'-end of triphosphorylated RNA, leading to a more labile monophosphorylated state that can stimulate subsequent ribonuclease cleavage. In Salmonella paratyphi C (strain RKS4594), this protein is RNA pyrophosphohydrolase.